Here is a 211-residue protein sequence, read N- to C-terminus: Peptide methionine sulfoxide reductase MsrA (211 aa).

Cys60 is a catalytic residue.

Belongs to the MsrA Met sulfoxide reductase family.

The enzyme catalyses L-methionyl-[protein] + [thioredoxin]-disulfide + H2O = L-methionyl-(S)-S-oxide-[protein] + [thioredoxin]-dithiol. It carries out the reaction [thioredoxin]-disulfide + L-methionine + H2O = L-methionine (S)-S-oxide + [thioredoxin]-dithiol. Functionally, has an important function as a repair enzyme for proteins that have been inactivated by oxidation. Catalyzes the reversible oxidation-reduction of methionine sulfoxide in proteins to methionine. The polypeptide is Peptide methionine sulfoxide reductase MsrA (Methanosarcina mazei (strain ATCC BAA-159 / DSM 3647 / Goe1 / Go1 / JCM 11833 / OCM 88) (Methanosarcina frisia)).